Reading from the N-terminus, the 534-residue chain is Calcium-dependent protein kinase 29 (534 aa).

The disordered stretch occupies residues 1–72 (MGFCFSKFGK…STSSGSQIGP (72 aa)). A lipid anchor (N-myristoyl glycine) is attached at glycine 2. Residues 16–27 (IPISSSSDSSPP) are compositionally biased toward low complexity. The span at 49–63 (NPQPKPKPAPPPPPS) shows a compositional bias: pro residues. The Protein kinase domain maps to 85 to 343 (YDLHKELGRG…AAEALEHPWM (259 aa)). ATP-binding positions include 91–99 (LGRGQFGIT) and lysine 114. Catalysis depends on aspartate 209, which acts as the Proton acceptor. Serine 249 carries the phosphoserine modification. Residues 348-378 (ISDKPINSAVLVRMKQFRAMNKLKKLALKVI) form an autoinhibitory domain region. EF-hand domains lie at 385 to 420 (EEIK…LGSK), 421 to 456 (LTES…RHRL), 457 to 492 (EKEE…YGMG), and 493 to 527 (DDAT…GTTD). The Ca(2+) site is built by aspartate 398, aspartate 400, serine 402, threonine 404, glutamate 409, aspartate 434, aspartate 436, serine 438, threonine 440, glutamate 445, aspartate 470, aspartate 472, serine 474, glutamate 481, aspartate 505, aspartate 507, aspartate 509, arginine 511, and glutamate 516.

This sequence belongs to the protein kinase superfamily. Ser/Thr protein kinase family. CDPK subfamily.

The protein resides in the membrane. The enzyme catalyses L-seryl-[protein] + ATP = O-phospho-L-seryl-[protein] + ADP + H(+). The catalysed reaction is L-threonyl-[protein] + ATP = O-phospho-L-threonyl-[protein] + ADP + H(+). With respect to regulation, activated by calcium. Autophosphorylation may play an important role in the regulation of the kinase activity. Its function is as follows. May play a role in signal transduction pathways that involve calcium as a second messenger. The protein is Calcium-dependent protein kinase 29 (CPK29) of Arabidopsis thaliana (Mouse-ear cress).